Here is a 59-residue protein sequence, read N- to C-terminus: Large ribosomal subunit protein uL30 (59 aa).

This sequence belongs to the universal ribosomal protein uL30 family. In terms of assembly, part of the 50S ribosomal subunit.

The chain is Large ribosomal subunit protein uL30 from Macrococcus caseolyticus (strain JCSC5402) (Macrococcoides caseolyticum).